The following is a 283-amino-acid chain: Pantothenate synthetase (283 aa).

ATP is bound at residue 30–37 (MGNLHDGH). The Proton donor role is filled by His37. Gln61 contacts (R)-pantoate. Gln61 lines the beta-alanine pocket. 149 to 152 (GEKD) is an ATP binding site. Gln155 contacts (R)-pantoate. Position 186–189 (186–189 (LSSR)) interacts with ATP.

The protein belongs to the pantothenate synthetase family. Homodimer.

It is found in the cytoplasm. The catalysed reaction is (R)-pantoate + beta-alanine + ATP = (R)-pantothenate + AMP + diphosphate + H(+). The protein operates within cofactor biosynthesis; (R)-pantothenate biosynthesis; (R)-pantothenate from (R)-pantoate and beta-alanine: step 1/1. Catalyzes the condensation of pantoate with beta-alanine in an ATP-dependent reaction via a pantoyl-adenylate intermediate. This is Pantothenate synthetase from Escherichia coli O157:H7.